The primary structure comprises 90 residues: Cyclin-dependent kinases regulatory subunit 1 (90 aa).

It belongs to the CKS family.

Binds to the catalytic subunit of the cyclin dependent kinases and is essential for their biological function. This chain is Cyclin-dependent kinases regulatory subunit 1 (CKS1), found in Oryza sativa subsp. indica (Rice).